A 453-amino-acid polypeptide reads, in one-letter code: Validoxylamine A glucosyltransferase (453 aa).

This sequence belongs to the glycosyltransferase 2 family. Mn(2+) is required as a cofactor.

It carries out the reaction validoxylamine A + UDP-alpha-D-glucose = validamycin A + UDP + H(+). Its function is as follows. Involved in the biosynthesis of the antifungal agent validamycin A. Catalyzes the final attachment of glucose from UDP-alpha-D-glucose to validoxylamine A to yield validamycin A. The protein is Validoxylamine A glucosyltransferase of Streptomyces hygroscopicus subsp. limoneus.